Here is a 320-residue protein sequence, read N- to C-terminus: MPDPMRSYLDFEKPVAELDSKVDELRAMAAAGTDIGEEVSRIEEKAGQALADLYANLTPWQKTMVARHPQRPHFTDFVNGLITEFTPLAGDRKFGEDAALLGGFGRFRGEPICVMGQEKGATTESRLKHNFGMARPEGYRKAVRLMEMAERFGIPVLSLVDSAGAYPGIGAEERGQAEAIARSTDACLSLGVPNVAIITGEGMSGGAIALTTANRVLMLEHAIYSVISPEAASSILWRDGTKAQEAANSMKITAQDMLRFGVVDTILKEPVGGAHRDPAAMIAATGEAIAQAFDELKGLDADAIRKQRRQKFIDIGRKLS.

Positions 41-295 constitute a CoA carboxyltransferase C-terminal domain; that stretch reads RIEEKAGQAL…GEAIAQAFDE (255 aa).

The protein belongs to the AccA family. In terms of assembly, acetyl-CoA carboxylase is a heterohexamer composed of biotin carboxyl carrier protein (AccB), biotin carboxylase (AccC) and two subunits each of ACCase subunit alpha (AccA) and ACCase subunit beta (AccD).

Its subcellular location is the cytoplasm. It catalyses the reaction N(6)-carboxybiotinyl-L-lysyl-[protein] + acetyl-CoA = N(6)-biotinyl-L-lysyl-[protein] + malonyl-CoA. It functions in the pathway lipid metabolism; malonyl-CoA biosynthesis; malonyl-CoA from acetyl-CoA: step 1/1. Functionally, component of the acetyl coenzyme A carboxylase (ACC) complex. First, biotin carboxylase catalyzes the carboxylation of biotin on its carrier protein (BCCP) and then the CO(2) group is transferred by the carboxyltransferase to acetyl-CoA to form malonyl-CoA. This chain is Acetyl-coenzyme A carboxylase carboxyl transferase subunit alpha, found in Bradyrhizobium sp. (strain BTAi1 / ATCC BAA-1182).